Here is a 229-residue protein sequence, read N- to C-terminus: NAD(P)H-quinone oxidoreductase subunit K, chloroplastic (229 aa).

C43, C44, C108, and C139 together coordinate [4Fe-4S] cluster.

This sequence belongs to the complex I 20 kDa subunit family. As to quaternary structure, NDH is composed of at least 16 different subunits, 5 of which are encoded in the nucleus. The cofactor is [4Fe-4S] cluster.

It localises to the plastid. Its subcellular location is the chloroplast thylakoid membrane. It carries out the reaction a plastoquinone + NADH + (n+1) H(+)(in) = a plastoquinol + NAD(+) + n H(+)(out). It catalyses the reaction a plastoquinone + NADPH + (n+1) H(+)(in) = a plastoquinol + NADP(+) + n H(+)(out). Functionally, NDH shuttles electrons from NAD(P)H:plastoquinone, via FMN and iron-sulfur (Fe-S) centers, to quinones in the photosynthetic chain and possibly in a chloroplast respiratory chain. The immediate electron acceptor for the enzyme in this species is believed to be plastoquinone. Couples the redox reaction to proton translocation, and thus conserves the redox energy in a proton gradient. This chain is NAD(P)H-quinone oxidoreductase subunit K, chloroplastic, found in Aethionema cordifolium (Lebanon stonecress).